The sequence spans 226 residues: MSGHDSGNAKRGRASFGAFVRKPVERDVVASAGEAAEQGSLEAVQAWPDDAVEVGAVVDAYGLKGWIKVATHADAGRGGDALLDARRWWLERGGERLSARILQSKTHGDTVVAHAAGVSDRDAALALRGFRVFVRREDFPALAADEFYWVDLIGLEVVNEQSVALGTVSGMIDNGVHSIMRVEYPAVGKDGQPTTDERLIPFVGVYVKTVDQAARRIVVDWEADYS.

Residues 144 to 225 (ADEFYWVDLI…RIVVDWEADY (82 aa)) form the PRC barrel domain.

The protein belongs to the RimM family. As to quaternary structure, binds ribosomal protein uS19.

Its subcellular location is the cytoplasm. An accessory protein needed during the final step in the assembly of 30S ribosomal subunit, possibly for assembly of the head region. Essential for efficient processing of 16S rRNA. May be needed both before and after RbfA during the maturation of 16S rRNA. It has affinity for free ribosomal 30S subunits but not for 70S ribosomes. In Burkholderia ambifaria (strain ATCC BAA-244 / DSM 16087 / CCUG 44356 / LMG 19182 / AMMD) (Burkholderia cepacia (strain AMMD)), this protein is Ribosome maturation factor RimM.